The sequence spans 482 residues: tRNA sulfurtransferase (482 aa).

The THUMP domain maps to 61 to 165 (LAIRDALTRI…DDRLLLIKGR (105 aa)). ATP is bound by residues 183-184 (LI), lysine 265, glycine 287, and glutamine 296. Cysteines 344 and 456 form a disulfide. One can recognise a Rhodanese domain in the interval 404 to 482 (FGPNDVILDI…GFNNVKVYRP (79 aa)). Catalysis depends on cysteine 456, which acts as the Cysteine persulfide intermediate.

This sequence belongs to the ThiI family.

The protein localises to the cytoplasm. The catalysed reaction is [ThiI sulfur-carrier protein]-S-sulfanyl-L-cysteine + a uridine in tRNA + 2 reduced [2Fe-2S]-[ferredoxin] + ATP + H(+) = [ThiI sulfur-carrier protein]-L-cysteine + a 4-thiouridine in tRNA + 2 oxidized [2Fe-2S]-[ferredoxin] + AMP + diphosphate. It carries out the reaction [ThiS sulfur-carrier protein]-C-terminal Gly-Gly-AMP + S-sulfanyl-L-cysteinyl-[cysteine desulfurase] + AH2 = [ThiS sulfur-carrier protein]-C-terminal-Gly-aminoethanethioate + L-cysteinyl-[cysteine desulfurase] + A + AMP + 2 H(+). It functions in the pathway cofactor biosynthesis; thiamine diphosphate biosynthesis. In terms of biological role, catalyzes the ATP-dependent transfer of a sulfur to tRNA to produce 4-thiouridine in position 8 of tRNAs, which functions as a near-UV photosensor. Also catalyzes the transfer of sulfur to the sulfur carrier protein ThiS, forming ThiS-thiocarboxylate. This is a step in the synthesis of thiazole, in the thiamine biosynthesis pathway. The sulfur is donated as persulfide by IscS. The protein is tRNA sulfurtransferase of Escherichia coli (strain 55989 / EAEC).